An 89-amino-acid chain; its full sequence is DNA/RNA-binding protein Alba 2 (89 aa).

Position 12 is an N6-acetyllysine (Lys-12). The Zn(2+) site is built by Lys-14, Asp-18, and Asp-22.

This sequence belongs to the histone-like Alba family. As to quaternary structure, forms homodimers and homotetramers. Homodimer at pH below 6.0. Forms homotetramers and higher order homooligomers at near the growth temperature of 80 degrees Celsius and pH 7.0. Interacts with Alba 1; heterodimers lack cooperative DNA-binding behavior and result in more compact chromatin structures compared to Alba 1 homodimers. Acetylated. Acetylation at Lys-12 decreases DNA-binding affinity.

It localises to the cytoplasm. The protein localises to the chromosome. Its function is as follows. Binds single-stranded DNA, RNA and double-stranded DNA. Involved in DNA compaction. This Saccharolobus solfataricus (strain ATCC 35092 / DSM 1617 / JCM 11322 / P2) (Sulfolobus solfataricus) protein is DNA/RNA-binding protein Alba 2.